The primary structure comprises 257 residues: Phosphonates import ATP-binding protein PhnC (257 aa).

Positions I2–V246 constitute an ABC transporter domain. G35–S42 contributes to the ATP binding site.

It belongs to the ABC transporter superfamily. Phosphonates importer (TC 3.A.1.9.1) family. The complex is composed of two ATP-binding proteins (PhnC), two transmembrane proteins (PhnE) and a solute-binding protein (PhnD).

Its subcellular location is the cell membrane. It carries out the reaction phosphonate(out) + ATP + H2O = phosphonate(in) + ADP + phosphate + H(+). In terms of biological role, part of the ABC transporter complex PhnCDE involved in phosphonates import. Responsible for energy coupling to the transport system. In Bacillus anthracis, this protein is Phosphonates import ATP-binding protein PhnC.